The chain runs to 683 residues: DNA ligase (683 aa).

NAD(+) contacts are provided by residues 29-33 (DAEFD), 79-80 (SL), and E109. K111 functions as the N6-AMP-lysine intermediate in the catalytic mechanism. 4 residues coordinate NAD(+): R132, E172, K288, and K312. Zn(2+)-binding residues include C406, C409, C425, and C431. The region spanning 595–683 (SVPRTLAGVT…GPPAEAGEPT (89 aa)) is the BRCT domain.

It belongs to the NAD-dependent DNA ligase family. LigA subfamily. The cofactor is Mg(2+). Requires Mn(2+) as cofactor.

It carries out the reaction NAD(+) + (deoxyribonucleotide)n-3'-hydroxyl + 5'-phospho-(deoxyribonucleotide)m = (deoxyribonucleotide)n+m + AMP + beta-nicotinamide D-nucleotide.. DNA ligase that catalyzes the formation of phosphodiester linkages between 5'-phosphoryl and 3'-hydroxyl groups in double-stranded DNA using NAD as a coenzyme and as the energy source for the reaction. It is essential for DNA replication and repair of damaged DNA. This is DNA ligase from Mycobacterium ulcerans (strain Agy99).